We begin with the raw amino-acid sequence, 452 residues long: Maltoporin (452 aa).

The N-terminal stretch at 1–25 (MMITLRKLPLAVAVAAGVMSAQAMA) is a signal peptide.

Belongs to the porin LamB (TC 1.B.3) family. Homotrimer formed of three 18-stranded antiparallel beta-barrels, containing three independent channels.

The protein localises to the cell outer membrane. The catalysed reaction is beta-maltose(in) = beta-maltose(out). In terms of biological role, involved in the transport of maltose and maltodextrins. The protein is Maltoporin of Salmonella newport (strain SL254).